The chain runs to 1132 residues: Protein sel-1 homolog 3 (1132 aa).

The tract at residues 1–24 is disordered; sequence MQRRGAGLGWPRQQQQQPPPLAVG. N-linked (GlcNAc...) asparagine glycosylation is found at N201, N382, and N527. Sel1-like repeat units lie at residues 575-609, 611-647, 694-730, 732-767, 768-800, 801-839, and 840-877; these read YLAV…RLSS, NLGY…DQHT, RLAQ…PALI, DYAI…QAVN, GLGW…DASY, NLGV…EGTL, and WCSL…LGHV. S608 carries the phosphoserine modification. N-linked (GlcNAc...) asparagine glycosylation is present at N937. Residues 952–988 form a Sel1-like 8 repeat; the sequence is KMGDLYYYGHQNQSQDLELSVQMYAQAALDGDSQGFF. A helical transmembrane segment spans residues 1057–1077; that stretch reads ILHSALIYFLGTFLLSILIAW. The segment at 1087-1132 is disordered; sequence ASDPPPRPSQASPDTATSTASPAVTPAADASDQDQPTVTNNPEPRG. The segment covering 1097–1116 has biased composition (low complexity); the sequence is ASPDTATSTASPAVTPAADA. Residues 1119 to 1132 are compositionally biased toward polar residues; the sequence is QDQPTVTNNPEPRG.

The protein localises to the membrane. The protein is Protein sel-1 homolog 3 (SEL1L3) of Homo sapiens (Human).